The chain runs to 956 residues: Zinc protease PQQL-like (956 aa).

Met1 is subject to N-acetylmethionine. His85 provides a ligand contact to Zn(2+). Catalysis depends on Glu88, which acts as the Proton acceptor. Residue His89 participates in Zn(2+) binding. Glu165 is a catalytic residue. Glu172 serves as a coordination point for Zn(2+).

The protein belongs to the peptidase M16 family. Zn(2+) serves as cofactor.

The chain is Zinc protease PQQL-like from Arabidopsis thaliana (Mouse-ear cress).